The sequence spans 383 residues: ATP phosphoribosyltransferase regulatory subunit (383 aa).

This sequence belongs to the class-II aminoacyl-tRNA synthetase family. HisZ subfamily. As to quaternary structure, heteromultimer composed of HisG and HisZ subunits.

It localises to the cytoplasm. Its pathway is amino-acid biosynthesis; L-histidine biosynthesis; L-histidine from 5-phospho-alpha-D-ribose 1-diphosphate: step 1/9. Required for the first step of histidine biosynthesis. May allow the feedback regulation of ATP phosphoribosyltransferase activity by histidine. In Cupriavidus taiwanensis (strain DSM 17343 / BCRC 17206 / CCUG 44338 / CIP 107171 / LMG 19424 / R1) (Ralstonia taiwanensis (strain LMG 19424)), this protein is ATP phosphoribosyltransferase regulatory subunit.